Reading from the N-terminus, the 126-residue chain is Methylglyoxal synthase (126 aa).

An MGS-like domain is found at 1–126 (MKALALIAHD…IAWIRKGTPQ (126 aa)). Substrate-binding positions include His9, Lys13, 35 to 38 (TGTT), and 55 to 56 (SG). Asp61 acts as the Proton donor/acceptor in catalysis. Substrate is bound at residue His88.

Belongs to the methylglyoxal synthase family.

It catalyses the reaction dihydroxyacetone phosphate = methylglyoxal + phosphate. Catalyzes the formation of methylglyoxal from dihydroxyacetone phosphate. The chain is Methylglyoxal synthase from Thermus thermophilus (strain ATCC BAA-163 / DSM 7039 / HB27).